Reading from the N-terminus, the 146-residue chain is MKILVLNGPNLGRLGRRQPEVYGSETLADVEARLQRLAGELGVEVELRQTDAEHEMLGWIHDAADAGLPVVLNPAAWTHTSVALRDACAELSAGLVEVHVSNVHAREDFRRHSFVSPVATGVVAGLGTAGYDLAVRFLAGRVVGGA.

The active-site Proton acceptor is Tyr22. Substrate-binding residues include Asn73, His79, and Asp86. The Proton donor role is filled by His99. Substrate is bound by residues 100-101 (VS) and Arg110.

This sequence belongs to the type-II 3-dehydroquinase family. Homododecamer.

The enzyme catalyses 3-dehydroquinate = 3-dehydroshikimate + H2O. Its pathway is metabolic intermediate biosynthesis; chorismate biosynthesis; chorismate from D-erythrose 4-phosphate and phosphoenolpyruvate: step 3/7. In terms of biological role, catalyzes a trans-dehydration via an enolate intermediate. The sequence is that of 3-dehydroquinate dehydratase from Kineococcus radiotolerans (strain ATCC BAA-149 / DSM 14245 / SRS30216).